Reading from the N-terminus, the 523-residue chain is MLFADVVRTSEAVRATRSRKTKVAALAELLRAAESAELAPVVAWLSGELRQGRIGTGWRTLTGVRVPPALDAALEVATVDAIFDELAAVSGAGSGNRRKELLTRLWSAATEPEQEFLLRLLTGELRQGALTALVAEAVAAAADVPVEQVRRAYMLSGQLPVTAEAALRGGAAALAEFRLEVGRPIQPMLAAPGASLEEAMTEFGGEVSVEHKLDGARIQVHRDGDRIAVFTRTLRDITAGVPELVELVARLDCTSVVLDGETLALTDAGRPRPFQETMSRFATADPARAAEVDLPPGTPVVPPVSSTRELLLHPYFFDCLHLDGRDLLDAPLSERRAALLAVVGEHAIPALIRPEPEAAAEYFDGALAAGHEGLMVKSLSAPYAAGRRGRSWQKIKPTHTLDLLVLGAEWGYGRRTGYLSNLHLGARDPRTGEPVMVGKTFKGLTDALLAWQTAEFPRHERARDEHTVYLWPELVVEIALDGVQVSPRYPGGVALRFARVVRYRPDKTPDQADTIDTVRGLLP.

E210 is a binding site for ATP. The active-site N6-AMP-lysine intermediate is the K212. Residues R217, R232, E261, F317, R388, and K394 each coordinate ATP.

This sequence belongs to the ATP-dependent DNA ligase family. Requires Mg(2+) as cofactor.

The catalysed reaction is ATP + (deoxyribonucleotide)n-3'-hydroxyl + 5'-phospho-(deoxyribonucleotide)m = (deoxyribonucleotide)n+m + AMP + diphosphate.. DNA ligase that seals nicks in double-stranded DNA during DNA replication, DNA recombination and DNA repair. The chain is Probable DNA ligase from Nocardia farcinica (strain IFM 10152).